A 257-amino-acid chain; its full sequence is Acetylglutamate kinase (257 aa).

Residues 43–44, Arg65, and Asn157 contribute to the substrate site; that span reads GG. Residues 180–185 and 208–210 each bind ATP; these read DVSGIL and IIT.

The protein belongs to the acetylglutamate kinase family. ArgB subfamily. Homodimer.

The protein localises to the cytoplasm. It carries out the reaction N-acetyl-L-glutamate + ATP = N-acetyl-L-glutamyl 5-phosphate + ADP. It functions in the pathway amino-acid biosynthesis; L-arginine biosynthesis; N(2)-acetyl-L-ornithine from L-glutamate: step 2/4. Its function is as follows. Catalyzes the ATP-dependent phosphorylation of N-acetyl-L-glutamate. The polypeptide is Acetylglutamate kinase (Salmonella schwarzengrund (strain CVM19633)).